The following is a 232-amino-acid chain: Orotidine 5'-phosphate decarboxylase (232 aa).

Residues D13, K35, 62 to 71 (DLKFHDIPNT), T122, R182, Q191, G211, and R212 each bind substrate. The Proton donor role is filled by K64.

The protein belongs to the OMP decarboxylase family. Type 1 subfamily. In terms of assembly, homodimer.

The enzyme catalyses orotidine 5'-phosphate + H(+) = UMP + CO2. It participates in pyrimidine metabolism; UMP biosynthesis via de novo pathway; UMP from orotate: step 2/2. Catalyzes the decarboxylation of orotidine 5'-monophosphate (OMP) to uridine 5'-monophosphate (UMP). In Pseudomonas savastanoi pv. phaseolicola (strain 1448A / Race 6) (Pseudomonas syringae pv. phaseolicola (strain 1448A / Race 6)), this protein is Orotidine 5'-phosphate decarboxylase.